The primary structure comprises 464 residues: Cerebellar degeneration-related protein 2-like (464 aa).

Coiled coils occupy residues 31–154, 201–264, and 342–379; these read AAEL…RRKT, VSSL…KSRV, and MSILREVDEQYHALLEKYEELLGKCRRHEESLRHAEVQ. The segment at 371–419 is disordered; that stretch reads ESLRHAEVQTSRPVSRDPSMKECRVAEPQQPPPTPPQTPSTPEALEGIS. A compositionally biased stretch (basic and acidic residues) spans 384–395; it reads VSRDPSMKECRV. A compositionally biased stretch (pro residues) spans 399 to 409; that stretch reads QQPPPTPPQTP.

This sequence belongs to the CDR2 family.

The protein is Cerebellar degeneration-related protein 2-like (cdr2l) of Danio rerio (Zebrafish).